The following is a 90-amino-acid chain: UPF0367 protein SYNPCC7002_A0153 (90 aa).

This sequence belongs to the UPF0367 family.

This chain is UPF0367 protein SYNPCC7002_A0153, found in Picosynechococcus sp. (strain ATCC 27264 / PCC 7002 / PR-6) (Agmenellum quadruplicatum).